We begin with the raw amino-acid sequence, 190 residues long: Holliday junction branch migration complex subunit RuvA (190 aa).

A domain I region spans residues 1–63; it reads MLDFIKGKVI…EESIEIYGFL (63 aa). Residues 64–139 are domain II; that stretch reads ESSERDLFEE…ILPSLQYEKD (76 aa). Asp-139 is a region of interest (flexible linker). Positions 139–190 are domain III; the sequence is DQKYDDILSALLNLGYKRLEAKEVLDKIYNNEKDEATIIRESLSILAGKDGK.

It belongs to the RuvA family. In terms of assembly, homotetramer. Forms an RuvA(8)-RuvB(12)-Holliday junction (HJ) complex. HJ DNA is sandwiched between 2 RuvA tetramers; dsDNA enters through RuvA and exits via RuvB. An RuvB hexamer assembles on each DNA strand where it exits the tetramer. Each RuvB hexamer is contacted by two RuvA subunits (via domain III) on 2 adjacent RuvB subunits; this complex drives branch migration. In the full resolvosome a probable DNA-RuvA(4)-RuvB(12)-RuvC(2) complex forms which resolves the HJ.

It localises to the cytoplasm. The RuvA-RuvB-RuvC complex processes Holliday junction (HJ) DNA during genetic recombination and DNA repair, while the RuvA-RuvB complex plays an important role in the rescue of blocked DNA replication forks via replication fork reversal (RFR). RuvA specifically binds to HJ cruciform DNA, conferring on it an open structure. The RuvB hexamer acts as an ATP-dependent pump, pulling dsDNA into and through the RuvAB complex. HJ branch migration allows RuvC to scan DNA until it finds its consensus sequence, where it cleaves and resolves the cruciform DNA. The polypeptide is Holliday junction branch migration complex subunit RuvA (Thermodesulfovibrio yellowstonii (strain ATCC 51303 / DSM 11347 / YP87)).